The chain runs to 279 residues: Large ribosomal subunit protein uL2 (279 aa).

Disordered stretches follow at residues 31-61 (KSLL…HKRH) and 222-279 (GMAM…RNAK). Residues 49–61 (KTSRHRGGGHKRH) are compositionally biased toward basic residues. Over residues 232-242 (MGGGEGKSKSG) the composition is skewed to gly residues. Residues 259–268 (LKTRNRKKAS) are compositionally biased toward basic residues.

Belongs to the universal ribosomal protein uL2 family. In terms of assembly, part of the 50S ribosomal subunit. Forms a bridge to the 30S subunit in the 70S ribosome.

In terms of biological role, one of the primary rRNA binding proteins. Required for association of the 30S and 50S subunits to form the 70S ribosome, for tRNA binding and peptide bond formation. It has been suggested to have peptidyltransferase activity; this is somewhat controversial. Makes several contacts with the 16S rRNA in the 70S ribosome. The chain is Large ribosomal subunit protein uL2 from Chlorobium chlorochromatii (strain CaD3).